Reading from the N-terminus, the 270-residue chain is Dihydroorotate dehydrogenase B (NAD(+)), catalytic subunit (270 aa).

FMN is bound by residues Ser12 and 35–36 (KT). Residues Lys35, 59 to 63 (NRIGL), and Asn114 contribute to the substrate site. FMN is bound at residue Asn114. Residue Cys117 is the Nucleophile of the active site. FMN-binding residues include Lys153 and Val179. Residue 180–181 (NT) participates in substrate binding. Residues Gly199, 226–227 (GG), and 248–249 (GS) each bind FMN.

Belongs to the dihydroorotate dehydrogenase family. Type 1 subfamily. Heterotetramer of 2 PyrK and 2 PyrD type B subunits. Requires FMN as cofactor.

The protein localises to the cytoplasm. The catalysed reaction is (S)-dihydroorotate + NAD(+) = orotate + NADH + H(+). Its pathway is pyrimidine metabolism; UMP biosynthesis via de novo pathway; orotate from (S)-dihydroorotate (NAD(+) route): step 1/1. In terms of biological role, catalyzes the conversion of dihydroorotate to orotate with NAD(+) as electron acceptor. The chain is Dihydroorotate dehydrogenase B (NAD(+)), catalytic subunit (pyrD) from Thermotoga maritima (strain ATCC 43589 / DSM 3109 / JCM 10099 / NBRC 100826 / MSB8).